The chain runs to 437 residues: Type II methyltransferase M.HgiCII (437 aa).

Positions 4 to 431 (FRFIDLFAGI…KALPNDHLFE (428 aa)) constitute an SAM-dependent MTase C5-type domain. Cys75 is a catalytic residue.

Belongs to the class I-like SAM-binding methyltransferase superfamily. C5-methyltransferase family.

The catalysed reaction is a 2'-deoxycytidine in DNA + S-adenosyl-L-methionine = a 5-methyl-2'-deoxycytidine in DNA + S-adenosyl-L-homocysteine + H(+). A methylase that recognizes the double-stranded sequence 5'-GGWCC-3', methylates C-? on both strands and protects the DNA from cleavage by the HgiCII endonuclease. This is Type II methyltransferase M.HgiCII from Herpetosiphon aurantiacus (Herpetosiphon giganteus).